The following is a 543-amino-acid chain: T-complex protein 1 subunit gamma (543 aa).

This sequence belongs to the TCP-1 chaperonin family.

Its subcellular location is the cytoplasm. Molecular chaperone; assists the folding of proteins upon ATP hydrolysis. Known to play a role, in vitro, in the folding of actin and tubulin. Plays a role in microtubule polymerization. This is T-complex protein 1 subunit gamma from Caenorhabditis elegans.